We begin with the raw amino-acid sequence, 492 residues long: N-succinylglutamate 5-semialdehyde dehydrogenase (492 aa).

220 to 225 contacts NAD(+); the sequence is GSASTG. Residues E243 and C277 contribute to the active site.

Belongs to the aldehyde dehydrogenase family. AstD subfamily.

The enzyme catalyses N-succinyl-L-glutamate 5-semialdehyde + NAD(+) + H2O = N-succinyl-L-glutamate + NADH + 2 H(+). The protein operates within amino-acid degradation; L-arginine degradation via AST pathway; L-glutamate and succinate from L-arginine: step 4/5. Functionally, catalyzes the NAD-dependent reduction of succinylglutamate semialdehyde into succinylglutamate. The polypeptide is N-succinylglutamate 5-semialdehyde dehydrogenase (Salmonella paratyphi A (strain AKU_12601)).